We begin with the raw amino-acid sequence, 494 residues long: Glutamate decarboxylase 5 (494 aa).

Lys276 is modified (N6-(pyridoxal phosphate)lysine).

It belongs to the group II decarboxylase family. In terms of assembly, homohexamer. Interacts with calmodulin. Requires pyridoxal 5'-phosphate as cofactor. As to expression, expressed in flowers.

The enzyme catalyses L-glutamate + H(+) = 4-aminobutanoate + CO2. Its function is as follows. Catalyzes the production of GABA. The calmodulin-binding is calcium-dependent and it is proposed that this may, directly or indirectly, form a calcium regulated control of GABA biosynthesis. In Arabidopsis thaliana (Mouse-ear cress), this protein is Glutamate decarboxylase 5 (GAD5).